Here is a 915-residue protein sequence, read N- to C-terminus: Isoleucine--tRNA ligase (915 aa).

Residues 57–67 (PYANGNLHMGH) carry the 'HIGH' region motif. Glu-554 provides a ligand contact to L-isoleucyl-5'-AMP. Positions 595 to 599 (KMSKS) match the 'KMSKS' region motif. Position 598 (Lys-598) interacts with ATP. Positions 885, 888, 905, and 908 each coordinate Zn(2+).

The protein belongs to the class-I aminoacyl-tRNA synthetase family. IleS type 1 subfamily. As to quaternary structure, monomer. Zn(2+) serves as cofactor.

The protein resides in the cytoplasm. It catalyses the reaction tRNA(Ile) + L-isoleucine + ATP = L-isoleucyl-tRNA(Ile) + AMP + diphosphate. Its function is as follows. Catalyzes the attachment of isoleucine to tRNA(Ile). As IleRS can inadvertently accommodate and process structurally similar amino acids such as valine, to avoid such errors it has two additional distinct tRNA(Ile)-dependent editing activities. One activity is designated as 'pretransfer' editing and involves the hydrolysis of activated Val-AMP. The other activity is designated 'posttransfer' editing and involves deacylation of mischarged Val-tRNA(Ile). The chain is Isoleucine--tRNA ligase from Staphylococcus carnosus (strain TM300).